A 336-amino-acid chain; its full sequence is UbiA prenyltransferase domain-containing protein 1 (336 aa).

Position 2 is an N-acetylalanine (Ala2). Helical transmembrane passes span 81–101 (LLLG…LVNT), 132–152 (FGVF…YLSA), 158–178 (LALI…GIGF), 186–206 (LVIL…VQVG), 207–227 (SLAI…EAIL), 243–265 (IVTL…LLFV), 275–295 (THCS…FSLE), and 313–333 (LNLL…AGSL).

This sequence belongs to the UbiA prenyltransferase family. Interacts with HMGCR and SOAT1.

It localises to the endoplasmic reticulum membrane. The protein localises to the golgi apparatus membrane. Its subcellular location is the mitochondrion membrane. The catalysed reaction is menadiol + (2E,6E,10E)-geranylgeranyl diphosphate = menaquinol-4 + diphosphate. It catalyses the reaction all-trans-decaprenyl diphosphate + 4-hydroxybenzoate = 4-hydroxy-3-(all-trans-decaprenyl)benzoate + diphosphate. Its pathway is quinol/quinone metabolism; menaquinone biosynthesis. It participates in cofactor biosynthesis; ubiquinone biosynthesis. Functionally, prenyltransferase that mediates the formation of menaquinone-4 (MK-4) and coenzyme Q10. MK-4 is a vitamin K2 isoform required for endothelial cell development. Mediates the conversion of phylloquinone (PK) into MK-4, probably by cleaving the side chain of phylloquinone (PK) to release 2-methyl-1,4-naphthoquinone (menadione; K3) and then prenylating it with geranylgeranyl pyrophosphate (GGPP) to form MK-4. Also plays a role in cardiovascular development independently of MK-4 biosynthesis, by acting as a coenzyme Q10 biosynthetic enzyme: coenzyme Q10, also named ubiquinone, plays an important antioxidant role in the cardiovascular system. Mediates biosynthesis of coenzyme Q10 in the Golgi membrane, leading to protect cardiovascular tissues from NOS3/eNOS-dependent oxidative stress. In Mus musculus (Mouse), this protein is UbiA prenyltransferase domain-containing protein 1 (Ubiad1).